The chain runs to 173 residues: UPF0316 protein Bsph_0745 (173 aa).

The next 3 helical transmembrane spans lie at 4-24 (IVLI…RTIF), 31-51 (FLAA…LSLV), and 58-78 (MLAM…GAKI).

Belongs to the UPF0316 family.

The protein localises to the cell membrane. In Lysinibacillus sphaericus (strain C3-41), this protein is UPF0316 protein Bsph_0745.